We begin with the raw amino-acid sequence, 327 residues long: N-acetyl-gamma-glutamyl-phosphate reductase (327 aa).

Cys-136 is an active-site residue.

The protein belongs to the NAGSA dehydrogenase family. Type 1 subfamily.

Its subcellular location is the cytoplasm. The catalysed reaction is N-acetyl-L-glutamate 5-semialdehyde + phosphate + NADP(+) = N-acetyl-L-glutamyl 5-phosphate + NADPH + H(+). It functions in the pathway amino-acid biosynthesis; L-arginine biosynthesis; N(2)-acetyl-L-ornithine from L-glutamate: step 3/4. Catalyzes the NADPH-dependent reduction of N-acetyl-5-glutamyl phosphate to yield N-acetyl-L-glutamate 5-semialdehyde. This Xylella fastidiosa (strain M23) protein is N-acetyl-gamma-glutamyl-phosphate reductase.